We begin with the raw amino-acid sequence, 736 residues long: Microtubule-associated protein mu-2 (736 aa).

Belongs to the orthoreovirus mu-2 protein family. Interacts with protein mu-NS; in viral inclusions. Interacts with polymerase lambda-3; this interaction stimulates the ATPase activity of mu-2. A divalent metal cation is required as a cofactor.

The protein resides in the virion. Its subcellular location is the host cytoplasm. The protein localises to the host cytoskeleton. In terms of biological role, minor inner capsid (core) component. Displays NTPase and RNA 5'-triphosphatase (RTPase) activities. ATP is the preferred substrate for hydrolysis. May function as a cofactor of polymerase lambda-3. Associates with microtubules and plays a role in the formation, structural organization and morphology of viral inclusions, where the assembly of cores and the replication of viral RNA occur. Together with mu-NS, recruits the other core proteins to these inclusions. The polypeptide is Microtubule-associated protein mu-2 (M1) (Mammalia (T2J)).